The chain runs to 113 residues: Ribosome-binding factor A (113 aa).

Belongs to the RbfA family. Monomer. Binds 30S ribosomal subunits, but not 50S ribosomal subunits or 70S ribosomes.

Its subcellular location is the cytoplasm. In terms of biological role, one of several proteins that assist in the late maturation steps of the functional core of the 30S ribosomal subunit. Associates with free 30S ribosomal subunits (but not with 30S subunits that are part of 70S ribosomes or polysomes). Required for efficient processing of 16S rRNA. May interact with the 5'-terminal helix region of 16S rRNA. The sequence is that of Ribosome-binding factor A from Mycoplasmopsis agalactiae (strain NCTC 10123 / CIP 59.7 / PG2) (Mycoplasma agalactiae).